A 49-amino-acid chain; its full sequence is Large ribosomal subunit protein bL33 (49 aa).

The protein belongs to the bacterial ribosomal protein bL33 family.

The polypeptide is Large ribosomal subunit protein bL33 (Desulfitobacterium hafniense (strain Y51)).